We begin with the raw amino-acid sequence, 797 residues long: MQEGNFLLSALQPETGVCSLALPSDLQLDRRGAEGPEADRLRAARVQEQVRARLLQLGQQSRHNGSAELDGSAESARGMPRGQYHTMQTGFSSRSQGMSGDKTSTFRPIAKPAYSPASWSSRSAVDLTCSRRLSSAHNGGSAFGAVGYGGTQPTPPMPTRPVSFHERGGAASRADYDTLSLRSLRLGPGGLDDRYSVVSEQLEPAAASTYRAYAYERQASSGSSRAGGLDWPEATEGPPSRTIRAPAMRTLQRFQSSHRSRGGTGSVSGAGLEPVARAPSVRSLSLSLADSGHLPDVRGLDSYTGHRTLQRLSSGFDDIDLPSAVKYLMASDPNLQVLGAAYIQHRCYSDAAAKKQARSLQAVPRLVKLFNHANQEVQRHATGAMRNLIYDNVDNKLALVEENGIFELLRTLREQDDELRKNVTGILWNLSSSDHLKDRLARDTLEQLTDLVLSPLSGAGGPPLIQQNASEAEIFYNATGFLRNLSSASQATRQKMRECHGLVDALVTYINHALDVGKCEDKSVENAVCVLRNLSYRLYDEMPPSALQRLEGRGRRDMAGAPPGEMVGCFTPQSRRLRELPLTADALTFAEVSKDPKGLEWLWSPQIVGLYNRLLQRCELNRHTTEAAAGALQNITAGDRRWAGVLSRLALEQERILNPLLDRVRTADHNQLRSLTGLIRNLSRNARNKDEMSTKVVSHLIEKLPGSVGEKCPPAEVLVNIIAVLNNLVVASPIAARDLLYFDGLRKLVFIKKKRDSPDSEKSSRAASSLLANLWQYSKLHRDFRAKGYRKEDFLGP.

A disordered region spans residues 58–81; it reads GQQSRHNGSAELDGSAESARGMPR. Arg81 carries the omega-N-methylarginine modification. Phosphoserine occurs at positions 123, 180, and 183. Tyr195 bears the Phosphotyrosine mark. Over residues 219–228 the composition is skewed to low complexity; the sequence is ASSGSSRAGG. The tract at residues 219–241 is disordered; sequence ASSGSSRAGGLDWPEATEGPPSR. Ser240 bears the Phosphoserine mark. The residue at position 250 (Thr250) is a Phosphothreonine. Residues 253-274 form a disordered region; that stretch reads RFQSSHRSRGGTGSVSGAGLEP. Arg261 bears the Omega-N-methylarginine mark. The segment at 283 to 288 is required for interaction with SFN; it reads SLSLSL. 4 positions are modified to phosphoserine: Ser285, Ser313, Ser314, and Ser331. Residues 294-724 are required for interaction with GSK3B; that stretch reads LPDVRGLDSY…AEVLVNIIAV (431 aa). ARM repeat units lie at residues 305-348, 351-390, 393-432, 449-487, 491-536, 596-637, 645-684, and 689-730; these read GHRT…HRCY, AAAK…NLIY, VDNK…NLSS, TDLV…NLSS, ATRQ…NLSY, PKGL…NITA, VLSR…NLSR, and KDEM…NLVV. Residues 516–797 are required for binding to PKP2 mRNA; that stretch reads VGKCEDKSVE…GYRKEDFLGP (282 aa).

This sequence belongs to the beta-catenin family. As to quaternary structure, found in a complex composed of CDH1, RAP1A and PKP3; PKP3 acts as a scaffold protein within the complex, the complex is required for CDH1 localization to mature desmosome cell junctions. Interacts with FXR1; the interaction facilitates the binding of PKP3 to PKP2 mRNA. Interacts (via ARM repeats) with GSK3B; the interaction may be involved in PKP3 protein degradation. Interacts with hyperphosphorylated and hypophosphorylated RB1; the interaction inhibits RB1 interaction with and repression of the transcription factor E2F1, potentially via sequestering RB1 to the cytoplasm. Interacts with CDKN1A; the interaction sequesters CDKN1A to the cytoplasm thereby repressing its role as an inhibitor of CDK4- and CDK6-driven RB1 phosphorylation. Interacts (via N-terminus) with SFN; the interaction maintains the cytoplasmic pool of PKP3, facilitates PKP3 exchange at desmosomes and restricts PKP3 localization to existing desmosome cell junctions. Interacts (via N-terminus) with JUP; the interaction is required for PKP3 localization to desmosome cell-cell junctions. Phosphorylated at Ser-285 when localized to the cytoplasm, PKP3 at desmosome cell junctions is not phosphorylated. Phosphorylation at Try-195 by SRC is induced by reactive oxygen species and potentially acts as a release mechanism from desmosome cell-cell junctions. As to expression, expressed in all layers of the epidermis, but is most abundant in the basal layer (at protein level). Expressed in keratinocytes of the epidermis at birth (at protein level). Expressed in the anagen non-keratinized inner root sheath cuticle and hair cuticle (at protein level). Also expressed in the matrix, precursors of the inner root sheath and hair shaft lineages (at protein level). Expressed at apical membranes in the outer hair root sheath and basal layer keratinocytes (at protein level). Expressed in intestinal epithelial cells and lamina propria of the ileum (at protein level). Expressed in keratinocytes (at protein level).

Its subcellular location is the nucleus. It localises to the cell junction. It is found in the desmosome. The protein resides in the cytoplasm. The protein localises to the cell membrane. Its subcellular location is the adherens junction. Functionally, a component of desmosome cell-cell junctions which are required for positive regulation of cellular adhesion. Required for the localization of DSG2, DSP and PKP2 to mature desmosome junctions. May also play a role in the maintenance of DSG3 protein abundance in keratinocytes. Required for the formation of DSP-containing desmosome precursors in the cytoplasm during desmosome assembly. Also regulates the accumulation of CDH1 to mature desmosome junctions, via cAMP-dependent signaling and its interaction with activated RAP1A. Positively regulates the stabilization of PKP2 mRNA and therefore protein abundance, via its interaction with FXR1, may also regulate the protein abundance of DSP via the same mechanism. May also regulate the protein abundance of the desmosome component PKP1. Required for the organization of desmosome junctions at intercellular borders between basal keratinocytes of the epidermis, as a result plays a role in maintenance of the dermal barrier and regulation of the dermal inflammatory response. Required during epidermal keratinocyte differentiation for cell adherence at tricellular cell-cell contacts, via regulation of the timely formation of adherens junctions and desmosomes in a calcium-dependent manner, and may also play a role in the organization of the intracellular actin fiber belt. Acts as a negative regulator of the inflammatory response in hematopoietic cells of the skin and intestine, via modulation of proinflammatory cytokine production. Important for epithelial barrier maintenance in the intestine to reduce intestinal permeability, thereby plays a role in protection from intestinal-derived endotoxemia. Required for the development of hair follicles, via a role in the regulation of inner root sheaf length, correct alignment and anterior-posterior polarity of hair follicles. Promotes proliferation and cell-cycle G1/S phase transition of keratinocytes. Promotes E2F1-driven transcription of G1/S phase promoting genes by acting to release E2F1 from its inhibitory interaction with RB1, via sequestering RB1 and CDKN1A to the cytoplasm and thereby increasing CDK4- and CDK6-driven phosphorylation of RB1. May act as a scaffold protein to facilitate MAPK phosphorylation of RPS6KA protein family members and subsequently promote downstream EGFR signaling. May play a role in the positive regulation of transcription of Wnt-mediated TCF-responsive target genes. In Mus musculus (Mouse), this protein is Plakophilin-3 (Pkp3).